Reading from the N-terminus, the 65-residue chain is Hirudin-3A (65 aa).

An interaction with thrombin active site region spans residues 1-3 (VVY). Cystine bridges form between Cys6–Cys14, Cys16–Cys28, and Cys22–Cys39. The segment at 39 to 65 (CVTGEGTPKPQSHNDGDFEEIPEEYLQ) is disordered. O-linked (GalNAc...) threonine glycosylation is present at Thr45. Residues 55–65 (DFEEIPEEYLQ) form an interaction with fibrinogen-binding exosite of thrombin region. The segment covering 55–65 (DFEEIPEEYLQ) has biased composition (acidic residues). Tyr63 is modified (sulfotyrosine).

The protein belongs to the protease inhibitor I14 (hirudin) family.

It is found in the secreted. Its function is as follows. Hirudin is a potent thrombin-specific protease inhibitor. It forms a stable non-covalent complex with alpha-thrombin, thereby abolishing its ability to cleave fibrinogen. This chain is Hirudin-3A, found in Hirudo medicinalis (Medicinal leech).